The chain runs to 240 residues: Methylthioribulose-1-phosphate dehydratase (240 aa).

A substrate-binding site is contributed by cysteine 103. Positions 121 and 123 each coordinate Zn(2+). Residue glutamate 144 is the Proton donor/acceptor of the active site. Residue histidine 200 coordinates Zn(2+).

It belongs to the aldolase class II family. MtnB subfamily. Requires Zn(2+) as cofactor.

The protein localises to the cytoplasm. It catalyses the reaction 5-(methylsulfanyl)-D-ribulose 1-phosphate = 5-methylsulfanyl-2,3-dioxopentyl phosphate + H2O. Its pathway is amino-acid biosynthesis; L-methionine biosynthesis via salvage pathway; L-methionine from S-methyl-5-thio-alpha-D-ribose 1-phosphate: step 2/6. In terms of biological role, catalyzes the dehydration of methylthioribulose-1-phosphate (MTRu-1-P) into 2,3-diketo-5-methylthiopentyl-1-phosphate (DK-MTP-1-P). The sequence is that of Methylthioribulose-1-phosphate dehydratase from Komagataella phaffii (strain GS115 / ATCC 20864) (Yeast).